The primary structure comprises 1335 residues: Aldehyde oxidase 2 (1335 aa).

A 2Fe-2S ferredoxin-type domain is found at 8 to 95 (DVLVFFVNGR…GAAVTTVEGV (88 aa)). Positions 47, 52, 55, and 77 each coordinate [2Fe-2S] cluster. Residue Gln116 participates in Mo-molybdopterin binding. 4 residues coordinate [2Fe-2S] cluster: Cys117, Cys120, Cys152, and Cys154. Cys154 is a Mo-molybdopterin binding site. The 186-residue stretch at 242–427 (FRGDRVTWVS…ESVHIPHSQK (186 aa)) folds into the FAD-binding PCMH-type domain. FAD is bound by residues 270–277 (LVLGNTAL), Ala351, Ser360, His364, Asp373, and Leu417. Mo-molybdopterin is bound by residues 821–822 (GF), 1103–1106 (ASVG), Gln1218, and Leu1285. Catalysis depends on Glu1287, which acts as the Proton acceptor; for azaheterocycle hydroxylase activity.

The protein belongs to the xanthine dehydrogenase family. Homodimer. It depends on [2Fe-2S] cluster as a cofactor. Requires FAD as cofactor. Mo-molybdopterin is required as a cofactor. Detected in kidney, Harderian gland and olfactory mucosa.

The protein localises to the cytoplasm. The enzyme catalyses an aldehyde + O2 + H2O = a carboxylate + H2O2 + H(+). Its function is as follows. Oxidase with broad substrate specificity, oxidizing aromatic azaheterocycles, such as phthalazine, as well as aldehydes, such as benzaldehyde and retinal. This Cavia porcellus (Guinea pig) protein is Aldehyde oxidase 2 (AOX2).